The sequence spans 192 residues: UPF0149 protein YgfB (192 aa).

It belongs to the UPF0149 family.

In Escherichia coli O127:H6 (strain E2348/69 / EPEC), this protein is UPF0149 protein YgfB.